Reading from the N-terminus, the 99-residue chain is PqqA binding protein (99 aa).

Belongs to the PqqD family. Monomer. Interacts with PqqE.

The protein operates within cofactor biosynthesis; pyrroloquinoline quinone biosynthesis. Functions as a PqqA binding protein and presents PqqA to PqqE, in the pyrroloquinoline quinone (PQQ) biosynthetic pathway. This chain is PqqA binding protein, found in Acinetobacter baylyi (strain ATCC 33305 / BD413 / ADP1).